The sequence spans 568 residues: Sulfite reductase [NADPH] hemoprotein beta-component (568 aa).

[4Fe-4S] cluster is bound by residues C425, C431, C470, and C474. C474 lines the siroheme pocket.

Belongs to the nitrite and sulfite reductase 4Fe-4S domain family. Alpha(8)-beta(8). The alpha component is a flavoprotein, the beta component is a hemoprotein. Siroheme serves as cofactor. It depends on [4Fe-4S] cluster as a cofactor.

The enzyme catalyses hydrogen sulfide + 3 NADP(+) + 3 H2O = sulfite + 3 NADPH + 4 H(+). Its pathway is sulfur metabolism; hydrogen sulfide biosynthesis; hydrogen sulfide from sulfite (NADPH route): step 1/1. Its function is as follows. Component of the sulfite reductase complex that catalyzes the 6-electron reduction of sulfite to sulfide. This is one of several activities required for the biosynthesis of L-cysteine from sulfate. The polypeptide is Sulfite reductase [NADPH] hemoprotein beta-component (Xanthomonas euvesicatoria pv. vesicatoria (strain 85-10) (Xanthomonas campestris pv. vesicatoria)).